A 545-amino-acid polypeptide reads, in one-letter code: DNA mismatch repair protein MutL (545 aa).

The disordered stretch occupies residues 517–545 (RRSGARGGGEARPRPQEESFPEAPLPREP).

Belongs to the DNA mismatch repair MutL/HexB family.

This protein is involved in the repair of mismatches in DNA. It is required for dam-dependent methyl-directed DNA mismatch repair. May act as a 'molecular matchmaker', a protein that promotes the formation of a stable complex between two or more DNA-binding proteins in an ATP-dependent manner without itself being part of a final effector complex. This is DNA mismatch repair protein MutL from Thermus thermophilus (strain ATCC 27634 / DSM 579 / HB8).